Reading from the N-terminus, the 74-residue chain is Large ribosomal subunit protein bL31 (74 aa).

This sequence belongs to the bacterial ribosomal protein bL31 family. Type A subfamily. In terms of assembly, part of the 50S ribosomal subunit.

Functionally, binds the 23S rRNA. This Chlorobaculum parvum (strain DSM 263 / NCIMB 8327) (Chlorobium vibrioforme subsp. thiosulfatophilum) protein is Large ribosomal subunit protein bL31.